We begin with the raw amino-acid sequence, 330 residues long: uncharacterized protein (330 aa).

10 helical membrane passes run 15-35 (LTLIAPFFLWGTAMVAMKGVL), 41-61 (FFVATVRLIPAGILVLLWAMG), 72-92 (GWGWIILFALVDGTLFQGFLA), 102-122 (LGSVIIDSQPIAVALLSSWLF), 125-145 (VIGGIGWLGLLLGVGGISLIG), 175-195 (LWMLLASLSMAVGTVLIPFVS), 201-221 (VVATGWHMIIGGLPLLAIALV), 238-258 (LAYATVFGSAIAYGIFFYLAS), 264-284 (SLSSLTFLTPIFALSFSNLIL), and 286-306 (EQLSSLQWLGVAFTLVSIYLI). EamA domains are found at residues 22 to 146 (FLWG…LIGL) and 182 to 308 (LSMA…LINQ).

The protein belongs to the EamA transporter family.

The protein resides in the cell membrane. This is an uncharacterized protein from Synechocystis sp. (strain ATCC 27184 / PCC 6803 / Kazusa).